Reading from the N-terminus, the 109-residue chain is Spermidine export protein MdtI (109 aa).

The next 4 membrane-spanning stretches (helical) occupy residues 6–26 (WIHG…NVLL), 36–56 (CYGI…SQAV), 64–84 (AYAL…WVLF), and 88–108 (LNPK…MIKF).

The protein belongs to the drug/metabolite transporter (DMT) superfamily. Small multidrug resistance (SMR) (TC 2.A.7.1) family. MdtI subfamily. Forms a complex with MdtJ.

It localises to the cell inner membrane. Its function is as follows. Catalyzes the excretion of spermidine. The polypeptide is Spermidine export protein MdtI (Salmonella choleraesuis (strain SC-B67)).